We begin with the raw amino-acid sequence, 453 residues long: Homogentisate 1,2-dioxygenase (453 aa).

Positions 1–42 (MLEKAEKQRRAGSGQQRAAGYMPGFGNDFETESLPGALPQGQ) are disordered. Catalysis depends on His306, which acts as the Proton acceptor. Residues His349 and Glu355 each coordinate Fe cation. Homogentisate is bound by residues Tyr364 and His385. His385 is a Fe cation binding site.

The protein belongs to the homogentisate dioxygenase family. Hexamer; dimer of trimers. The cofactor is Fe cation.

It carries out the reaction homogentisate + O2 = 4-maleylacetoacetate + H(+). It functions in the pathway amino-acid degradation; L-phenylalanine degradation; acetoacetate and fumarate from L-phenylalanine: step 4/6. Functionally, involved in the catabolism of homogentisate (2,5-dihydroxyphenylacetate or 2,5-OH-PhAc), a central intermediate in the degradation of phenylalanine and tyrosine. Catalyzes the oxidative ring cleavage of the aromatic ring of homogentisate to yield maleylacetoacetate. The polypeptide is Homogentisate 1,2-dioxygenase (Rhizobium meliloti (strain 1021) (Ensifer meliloti)).